Reading from the N-terminus, the 516-residue chain is UvrABC system protein C (516 aa).

The region spanning 9–87 (HLPGCYLFKD…IKKHWPRYNI (79 aa)) is the GIY-YIG domain. A UVR domain is found at 191–226 (GELIESMEKEMKKMAAKQMFEQAMALRDEISALEYL).

It belongs to the UvrC family. In terms of assembly, interacts with UvrB in an incision complex.

It localises to the cytoplasm. The UvrABC repair system catalyzes the recognition and processing of DNA lesions. UvrC both incises the 5' and 3' sides of the lesion. The N-terminal half is responsible for the 3' incision and the C-terminal half is responsible for the 5' incision. In Methanosarcina acetivorans (strain ATCC 35395 / DSM 2834 / JCM 12185 / C2A), this protein is UvrABC system protein C.